A 512-amino-acid chain; its full sequence is N-acetyltryptophan 6-hydroxylase ivoC (512 aa).

A helical transmembrane segment spans residues 6–26; sequence LVFSFPAWALLLVLTLLYTLY. Asn118 is a glycosylation site (N-linked (GlcNAc...) asparagine). Residue Cys453 coordinates heme.

It belongs to the cytochrome P450 family. Heme serves as cofactor.

The protein localises to the membrane. Its pathway is pigment biosynthesis. N-acetyltryptophan 6-hydroxylase; part of the pathway that mediates the biosynthesis of the gray-brown conidiophore pigment. The first step of the pathway is performed by the nonribosomal peptide synthetase ivoA that catalyzes ATP-dependent unidirectional stereoinversion of L-tryptophan to D-tryptophan with complete conversion. While the stereoinversion is catalyzed by the epimerization (E) domain of ivoA, the terminal condensation (C) domain stereoselectively hydrolyzes D-tryptophanyl-S-phosphopantetheine thioester and thus represents a non-canonical C domain function. D-tryptophan is acetylated, probably by an endogenous acetyltransferase. N-acetyltryptophan is further 6-hydroxylated into N-acetyl-6-hydroxytryptophan (AHT) by the cytochrome P450 monooxygenase ivoC. N-acetyl-6-hydroxytryptophan is substrate of the N-acetyl-6-hydroxytryptophan oxidase ivoB to produce the gray-brown conidiophore pigment. The polypeptide is N-acetyltryptophan 6-hydroxylase ivoC (Emericella nidulans (strain FGSC A4 / ATCC 38163 / CBS 112.46 / NRRL 194 / M139) (Aspergillus nidulans)).